A 186-amino-acid polypeptide reads, in one-letter code: Ribosome-recycling factor (186 aa).

It belongs to the RRF family.

The protein localises to the cytoplasm. In terms of biological role, responsible for the release of ribosomes from messenger RNA at the termination of protein biosynthesis. May increase the efficiency of translation by recycling ribosomes from one round of translation to another. This is Ribosome-recycling factor from Paraburkholderia phymatum (strain DSM 17167 / CIP 108236 / LMG 21445 / STM815) (Burkholderia phymatum).